Consider the following 173-residue polypeptide: Alpha-crystallin A chain (173 aa).

Position 1 is an N-acetylmethionine (M1). The segment at 1–63 (MDIAIQHPWF…RTVLDSGISE (63 aa)) is required for complex formation with BFSP1 and BFSP2. At Q6 the chain carries Deamidated glutamine; partial. Position 45 is a phosphoserine (S45). Q50 bears the Deamidated glutamine; partial mark. The region spanning 52–162 (LFRTVLDSGI…GHSERAIPVS (111 aa)) is the sHSP domain. Position 70 is an N6-acetyllysine (K70). A Deamidated glutamine; partial modification is found at Q90. N6-acetyllysine is present on K99. Position 100 (H100) interacts with Zn(2+). N101 is modified (deamidated asparagine; partial). Positions 102 and 107 each coordinate Zn(2+). S122 is modified (phosphoserine). N123 is subject to Deamidated asparagine; partial. The interval 144 to 173 (PKVPSGLDAGHSERAIPVSREEKPSSAPSS) is disordered. The segment covering 153–167 (GHSERAIPVSREEKP) has biased composition (basic and acidic residues). H154 contributes to the Zn(2+) binding site. An O-linked (GlcNAc) serine glycan is attached at S162.

The protein belongs to the small heat shock protein (HSP20) family. Heteromer composed of three CRYAA and one CRYAB subunits. Inter-subunit bridging via zinc ions enhances stability, which is crucial as there is no protein turn over in the lens. Can also form homodimers and homotetramers (dimers of dimers) which serve as the building blocks of homooligomers. Within homooligomers, the zinc-binding motif is created from residues of 3 different molecules. His-100 and Glu-102 from one molecule are ligands of the zinc ion, and His-107 and His-154 residues from additional molecules complete the site with tetrahedral coordination geometry. Part of a complex required for lens intermediate filament formation composed of BFSP1, BFSP2 and CRYAA. Acetylation at Lys-70 may increase chaperone activity. Post-translationally, undergoes age-dependent proteolytical cleavage at the C-terminus.

It is found in the cytoplasm. The protein resides in the nucleus. Its function is as follows. Contributes to the transparency and refractive index of the lens. Acts as a chaperone, preventing aggregation of various proteins under a wide range of stress conditions. Required for the correct formation of lens intermediate filaments as part of a complex composed of BFSP1, BFSP2 and CRYAA. The sequence is that of Alpha-crystallin A chain (CRYAA) from Tapirus indicus (Asiatic tapir).